The following is a 113-amino-acid chain: Putative pterin-4-alpha-carbinolamine dehydratase (113 aa).

It belongs to the pterin-4-alpha-carbinolamine dehydratase family.

The enzyme catalyses (4aS,6R)-4a-hydroxy-L-erythro-5,6,7,8-tetrahydrobiopterin = (6R)-L-erythro-6,7-dihydrobiopterin + H2O. The polypeptide is Putative pterin-4-alpha-carbinolamine dehydratase (Nitrosomonas europaea (strain ATCC 19718 / CIP 103999 / KCTC 2705 / NBRC 14298)).